Reading from the N-terminus, the 766-residue chain is Cytoplasmic polyadenylation element-binding protein 3 (766 aa).

Disordered regions lie at residues 1-35 (MSQEEVPGEIPGDIAIEKAENTVQDDVEAKNTSET), 131-179 (VPSR…ARRL), and 216-299 (PVPI…LPPR). Composition is skewed to polar residues over residues 233–256 (ETPTDSPAKTETSSISKSYGSDYQ) and 276–289 (STPNRGQGLSNRDN). The RRM domain maps to 310–332 (IFVGGVPWDITEAALKDSFGEFG). The interval 578–602 (KAFSGPNRRSHLSSNSPSKPASLMS) is disordered. Over residues 589 to 602 (LSSNSPSKPASLMS) the composition is skewed to low complexity.

Its function is as follows. Cytoplasmic polyadenylation element binding protein that binds to and regulates the translation of specific mRNAs. This is Cytoplasmic polyadenylation element-binding protein 3 (cpb-3) from Caenorhabditis remanei (Caenorhabditis vulgaris).